Consider the following 879-residue polypeptide: Metabotropic glutamate receptor 3 (879 aa).

An N-terminal signal peptide occupies residues 1 to 22; sequence MKMLTRLQILMLALFSKGFLLS. Over 23–576 the chain is Extracellular; the sequence is LGDHNFMRRE…EDYIKWEDAW (554 aa). Cysteines 57 and 99 form a disulfide. L-glutamate-binding positions include R68, S151, and 172–174; that span reads AST. N-linked (GlcNAc...) asparagine glycosylation occurs at N209. Residue Y222 participates in L-glutamate binding. 7 disulfides stabilise this stretch: C240–C527, C361–C373, C412–C419, C509–C528, C513–C531, C534–C546, and C549–C562. Residue N292 is glycosylated (N-linked (GlcNAc...) asparagine). D301 lines the L-glutamate pocket. K389 contributes to the L-glutamate binding site. N-linked (GlcNAc...) asparagine glycosylation is found at N414 and N439. The chain crosses the membrane as a helical span at residues 577–599; it reads AIGPVTIACLGFLCTCIVITVFI. The Cytoplasmic portion of the chain corresponds to 600-613; the sequence is KHNNTPLVKASGRE. A helical transmembrane segment spans residues 614–634; the sequence is LCYILLFGVSLSYCMTFFFIA. The Extracellular segment spans residues 635–645; sequence KPSPVICALRR. Residues 646–664 form a helical membrane-spanning segment; it reads LGLGTSFAICYSALLTKTN. Topologically, residues 665–688 are cytoplasmic; that stretch reads CIARIFDGVKNGAQRPKFISPSSQ. The chain crosses the membrane as a helical span at residues 689 to 709; that stretch reads VFICLGLILVQIVMVSVWLIL. At 710–734 the chain is on the extracellular side; it reads ETPGTRRYTLPEKRETVILKCNVKD. The helical transmembrane segment at 735–756 threads the bilayer; that stretch reads SSMLISLTYDVVLVILCTVYAF. Residues 757 to 769 lie on the Cytoplasmic side of the membrane; it reads KTRKCPENFNEAK. The helical transmembrane segment at 770-792 threads the bilayer; sequence FIGFTMYTTCIIWLAFLPIFYVT. The Extracellular portion of the chain corresponds to 793–802; sequence SSDYRVQTTT. A helical transmembrane segment spans residues 803–828; sequence MCISVSLSGFVVLGCLFAPKVHIVLF. The Cytoplasmic segment spans residues 829 to 879; sequence QPQKNVVTHRLHLNRFSVSGTATTYSQSSASTYVPTVCNGREVLDSTTSSL.

The protein belongs to the G-protein coupled receptor 3 family. As to quaternary structure, interacts with TAMALIN. Is widely distributed in the CNS. Predominant expression is seen in the neuronal cells of the cerebral cortex, dentate gyrus, and glial cells throughout brain regions.

It localises to the cell membrane. Its function is as follows. G-protein coupled receptor for glutamate. Ligand binding causes a conformation change that triggers signaling via guanine nucleotide-binding proteins (G proteins) and modulates the activity of down-stream effectors. Signaling inhibits adenylate cyclase activity. This is Metabotropic glutamate receptor 3 (Grm3) from Rattus norvegicus (Rat).